Here is a 169-residue protein sequence, read N- to C-terminus: Oleosin Cor a 15 (169 aa).

A run of 2 helical transmembrane segments spans residues 38–58 (IAVV…GLTF) and 70–90 (PLFV…GLAV). The short motif at 70–81 (PLFVLCSPVLVP) is the Proline-knot element. Composition is skewed to basic and acidic residues over residues 122–131 (QMEHAKRRAQ) and 160–169 (EGGRGEEKKT). Positions 122–169 (QMEHAKRRAQDTAGHLGQKARETGQTVTGKGQEAGKTLEGGRGEEKKT) are disordered.

It belongs to the oleosin family. Expressed in seeds (at protein level).

Its subcellular location is the lipid droplet. The protein localises to the membrane. May have a structural role to stabilize the lipid body during desiccation of the seed by preventing coalescence of the oil. Probably interacts with both lipid and phospholipid moieties of lipid bodies. May also provide recognition signals for specific lipase anchorage in lipolysis during seedling growth. In Corylus avellana (European hazel), this protein is Oleosin Cor a 15.